A 176-amino-acid chain; its full sequence is dCTP deaminase (176 aa).

DCTP is bound by residues 102 to 107 (RSTFAR) and Asp-118. Glu-128 acts as the Proton donor/acceptor in catalysis. 2 residues coordinate dCTP: Tyr-160 and Gln-167.

It belongs to the dCTP deaminase family. In terms of assembly, homotrimer.

The catalysed reaction is dCTP + H2O + H(+) = dUTP + NH4(+). It participates in pyrimidine metabolism; dUMP biosynthesis; dUMP from dCTP (dUTP route): step 1/2. Its function is as follows. Catalyzes the deamination of dCTP to dUTP. This is dCTP deaminase from Hyperthermus butylicus (strain DSM 5456 / JCM 9403 / PLM1-5).